We begin with the raw amino-acid sequence, 369 residues long: D-glucosaminate-6-phosphate ammonia lyase (369 aa).

K213 carries the N6-(pyridoxal phosphate)lysine modification.

It belongs to the SelA family. It depends on pyridoxal 5'-phosphate as a cofactor.

It catalyses the reaction 2-amino-2-deoxy-D-gluconate 6-phosphate = 2-dehydro-3-deoxy-6-phospho-D-gluconate + NH4(+). Its function is as follows. Involved in the catabolism of D-glucosaminate. Catalyzes the conversion of D-glucosaminate 6-phosphate to yield keto-3-deoxygluconate 6-phosphate (KDGP). The protein is D-glucosaminate-6-phosphate ammonia lyase of Salmonella typhimurium (strain 14028s / SGSC 2262).